The chain runs to 1158 residues: ATP-dependent helicase/deoxyribonuclease subunit B (1158 aa).

Belongs to the helicase family. AddB/RexB type 2 subfamily. As to quaternary structure, heterodimer of AddA and RexB. The cofactor is Mg(2+).

Its function is as follows. The heterodimer acts as both an ATP-dependent DNA helicase and an ATP-dependent, dual-direction single-stranded exonuclease. Recognizes the chi site generating a DNA molecule suitable for the initiation of homologous recombination. This subunit has 5' -&gt; 3' nuclease activity but not helicase activity. This Lactobacillus gasseri (strain ATCC 33323 / DSM 20243 / BCRC 14619 / CIP 102991 / JCM 1131 / KCTC 3163 / NCIMB 11718 / NCTC 13722 / AM63) protein is ATP-dependent helicase/deoxyribonuclease subunit B.